Reading from the N-terminus, the 428-residue chain is Dihydroorotase (428 aa).

Residues His-59 and His-61 each coordinate Zn(2+). Substrate contacts are provided by residues 61 to 63 (HLR) and Asn-93. Zn(2+)-binding residues include Asp-151, His-178, and His-231. Asn-277 is a substrate binding site. Asp-304 is a binding site for Zn(2+). Asp-304 is an active-site residue. Substrate-binding positions include His-308 and 322–323 (FG).

Belongs to the metallo-dependent hydrolases superfamily. DHOase family. Class I DHOase subfamily. Zn(2+) is required as a cofactor.

It catalyses the reaction (S)-dihydroorotate + H2O = N-carbamoyl-L-aspartate + H(+). Its pathway is pyrimidine metabolism; UMP biosynthesis via de novo pathway; (S)-dihydroorotate from bicarbonate: step 3/3. Catalyzes the reversible cyclization of carbamoyl aspartate to dihydroorotate. In Bacillus cereus (strain ATCC 14579 / DSM 31 / CCUG 7414 / JCM 2152 / NBRC 15305 / NCIMB 9373 / NCTC 2599 / NRRL B-3711), this protein is Dihydroorotase.